We begin with the raw amino-acid sequence, 306 residues long: Transcription factor MYBS1 (306 aa).

The Myb-like domain maps to 18 to 73; that stretch reads WTREDDKAFENALAACAAPPPADGGAPDDDWFAALAASVPGARSAEEVRRHYEALV. The Nuclear export signal 1 motif lies at 72–86; the sequence is LVEDVAAIDAGRVPL. The disordered stretch occupies residues 89-142; it reads YAGEESAAPPDGAGAAAAASKDGGHRRDERKGGGGGYDGGKSCSKAEQERRKGI. Residues 92-109 show a composition bias toward low complexity; sequence EESAAPPDGAGAAAAASK. Composition is skewed to basic and acidic residues over residues 110–120 and 132–142; these read DGGHRRDERKG and SKAEQERRKGI. The short motif at 133–140 is the Nuclear localization signal 1 element; the sequence is KAEQERRK. One can recognise an HTH myb-type domain in the interval 136–192; it reads QERRKGIPWTEEEHRLFLLGLDKFGKGDWRSISRNFVISRTPTQVASHAQKYFIRLN. The H-T-H motif DNA-binding region spans 164-188; that stretch reads WRSISRNFVISRTPTQVASHAQKYF. A Nuclear localization signal 2 motif is present at residues 196–200; the sequence is RDRRR. The Nuclear export signal 2 motif lies at 203-215; that stretch reads IHDITSVTAGDQV. The segment covering 228–241 has biased composition (low complexity); sequence ATGNPAAAALGPPG. The disordered stretch occupies residues 228–255; it reads ATGNPAAAALGPPGMKHHHHHHPGGAPP.

Homodimer. Interacts with GAMYB. As to expression, expressed in aboveground tissues, with the highest level in leaves.

The protein localises to the nucleus. It localises to the cytoplasm. Transcription activator that binds to 5'-TATCCA-3' elements in gene promoters. Derepresses strongly the sugar-repressed transcription of promoters containing SRS or 5'-TATCCA-3' elements. Functions with GAMYB to integrate diverse nutrient starvation and gibberellin (GA) signaling pathways during germination of grains. Sugar, nitrogen and phosphate starvation signals converge and interconnect with GA to promote the co-nuclear import of MYBS1 and GAMYB, resulting in the expression of a large set of GA-inducible hydrolases, transporters, and regulators that are essential for mobilization of nutrient reserves in the endosperm to support seedling growth. This Oryza sativa subsp. japonica (Rice) protein is Transcription factor MYBS1.